The chain runs to 553 residues: Keratin, type II cytoskeletal 6A (553 aa).

Over residues 1–20 (MSTKTTIKSQTSHRGYSASS) the composition is skewed to polar residues. Positions 1–21 (MSTKTTIKSQTSHRGYSASSA) are disordered. The tract at residues 1 to 151 (MSTKTTIKSQ…DPTIQRVRTE (151 aa)) is head. Positions 152 to 187 (EREQIKTLNNKFASFIDKVRFLEQQNKVLDTKWALL) are coil 1A. Residues 152-465 (EREQIKTLNN…KLLEGEECRL (314 aa)) enclose the IF rod domain. The tract at residues 188-206 (QEQGTKTVRQNLEPMFEQY) is linker 1. A coil 1B region spans residues 207-298 (ISNLRRQLDS…ALYEAELSQM (92 aa)). The segment at 299-322 (QTHISDTSVVLSMDNNRSLDLDSI) is linker 12. A coil 2 region spans residues 323–461 (IAEVKAQYED…ATYRKLLEGE (139 aa)). The tail stretch occupies residues 462 to 553 (ECRLNGEGVG…TSSSKKSYRQ (92 aa)). Residues 528–553 (LSSSGGLSSSTIKYTTTSSSKKSYRQ) are disordered. A compositionally biased stretch (low complexity) spans 531 to 553 (SGGLSSSTIKYTTTSSSKKSYRQ).

The protein belongs to the intermediate filament family. Heterodimer of a type I and a type II keratin. KRT6 isomers associate with KRT16 and/or KRT17. Interacts with TCHP. In terms of tissue distribution, predominates in the adult trunk skin, tongue, trachea/esophagus and eye. In adult skin, localization is restricted to hair follicles, where it is localized predominantly in the outer root sheath.

Functionally, epidermis-specific type I keratin involved in wound healing. Involved in the activation of follicular keratinocytes after wounding, while it does not play a major role in keratinocyte proliferation or migration. Participates in the regulation of epithelial migration by inhibiting the activity of SRC during wound repair. This chain is Keratin, type II cytoskeletal 6A (Krt6a), found in Mus musculus (Mouse).